A 352-amino-acid polypeptide reads, in one-letter code: Glutamine synthetase cytosolic isozyme (352 aa).

The GS beta-grasp domain occupies 19–98 (FIAEYIWIDA…VMCDTYTPAG (80 aa)). Residues 105-352 (KRCNAAKIFS…TSMIAETTIL (248 aa)) form the GS catalytic domain.

This sequence belongs to the glutamine synthetase family. Homooctamer.

It is found in the cytoplasm. The catalysed reaction is L-glutamate + NH4(+) + ATP = L-glutamine + ADP + phosphate + H(+). This Daucus carota (Wild carrot) protein is Glutamine synthetase cytosolic isozyme (GLN1).